The primary structure comprises 481 residues: 3-isopropylmalate dehydratase large subunit (481 aa).

3 residues coordinate [4Fe-4S] cluster: cysteine 363, cysteine 423, and cysteine 426. The segment at 432–459 (DQLKPGERSASTSNRNFEGRQGPGGRTH) is disordered.

It belongs to the aconitase/IPM isomerase family. LeuC type 1 subfamily. Heterodimer of LeuC and LeuD. [4Fe-4S] cluster is required as a cofactor.

The enzyme catalyses (2R,3S)-3-isopropylmalate = (2S)-2-isopropylmalate. The protein operates within amino-acid biosynthesis; L-leucine biosynthesis; L-leucine from 3-methyl-2-oxobutanoate: step 2/4. Catalyzes the isomerization between 2-isopropylmalate and 3-isopropylmalate, via the formation of 2-isopropylmaleate. In Corynebacterium glutamicum (strain R), this protein is 3-isopropylmalate dehydratase large subunit.